Reading from the N-terminus, the 528-residue chain is Glucose-6-phosphate isomerase (528 aa).

Glu-322 functions as the Proton donor in the catalytic mechanism. Catalysis depends on residues His-351 and Lys-455.

This sequence belongs to the GPI family.

It localises to the cytoplasm. The catalysed reaction is alpha-D-glucose 6-phosphate = beta-D-fructose 6-phosphate. It functions in the pathway carbohydrate biosynthesis; gluconeogenesis. The protein operates within carbohydrate degradation; glycolysis; D-glyceraldehyde 3-phosphate and glycerone phosphate from D-glucose: step 2/4. Its function is as follows. Catalyzes the reversible isomerization of glucose-6-phosphate to fructose-6-phosphate. The sequence is that of Glucose-6-phosphate isomerase from Nostoc sp. (strain PCC 7120 / SAG 25.82 / UTEX 2576).